We begin with the raw amino-acid sequence, 203 residues long: Holliday junction branch migration complex subunit RuvA (203 aa).

Residues 1-65 (MIAYIHGKLL…EDAFDLYGFP (65 aa)) are domain I. The interval 66–144 (CFDDREVFRT…TLKSATVRSG (79 aa)) is domain II. Positions 145-155 (ACPVEGDRSEF) are flexible linker. The tract at residues 155–203 (FLDALSGLRNLGYGDDEVRDFLKDIFDEEPDLDAGGAIRVALKKISQNK) is domain III.

It belongs to the RuvA family. In terms of assembly, homotetramer. Forms an RuvA(8)-RuvB(12)-Holliday junction (HJ) complex. HJ DNA is sandwiched between 2 RuvA tetramers; dsDNA enters through RuvA and exits via RuvB. An RuvB hexamer assembles on each DNA strand where it exits the tetramer. Each RuvB hexamer is contacted by two RuvA subunits (via domain III) on 2 adjacent RuvB subunits; this complex drives branch migration. In the full resolvosome a probable DNA-RuvA(4)-RuvB(12)-RuvC(2) complex forms which resolves the HJ.

It localises to the cytoplasm. Its function is as follows. The RuvA-RuvB-RuvC complex processes Holliday junction (HJ) DNA during genetic recombination and DNA repair, while the RuvA-RuvB complex plays an important role in the rescue of blocked DNA replication forks via replication fork reversal (RFR). RuvA specifically binds to HJ cruciform DNA, conferring on it an open structure. The RuvB hexamer acts as an ATP-dependent pump, pulling dsDNA into and through the RuvAB complex. HJ branch migration allows RuvC to scan DNA until it finds its consensus sequence, where it cleaves and resolves the cruciform DNA. This is Holliday junction branch migration complex subunit RuvA from Maridesulfovibrio salexigens (strain ATCC 14822 / DSM 2638 / NCIMB 8403 / VKM B-1763) (Desulfovibrio salexigens).